A 146-amino-acid chain; its full sequence is MKIMVINGPNLNMVGVREKGIYGAKSFEDICEYIKEEGKKRGHEITLFQSNCEGEIIDELQKAYFENYDGIIINPGAYTHYSYAIHDAIKGINIDTVEVHLSNVHAREDFRKKSVTAPACIGQMCGFGEDGYILAIKALELKKMSK.

The active-site Proton acceptor is Y22. Substrate is bound by residues N74, H80, and D87. H100 (proton donor) is an active-site residue. Substrate-binding positions include 101–102 and R111; that span reads LS.

It belongs to the type-II 3-dehydroquinase family. In terms of assembly, homododecamer.

It catalyses the reaction 3-dehydroquinate = 3-dehydroshikimate + H2O. It participates in metabolic intermediate biosynthesis; chorismate biosynthesis; chorismate from D-erythrose 4-phosphate and phosphoenolpyruvate: step 3/7. In terms of biological role, catalyzes a trans-dehydration via an enolate intermediate. The protein is 3-dehydroquinate dehydratase of Clostridium beijerinckii (strain ATCC 51743 / NCIMB 8052) (Clostridium acetobutylicum).